We begin with the raw amino-acid sequence, 201 residues long: Guanylyl cyclase-activating protein 1 (201 aa).

The N-myristoyl glycine moiety is linked to residue Gly2. Residue Asn3 is modified to Deamidated asparagine. EF-hand domains lie at 31 to 49 (SGQLTLYEFRQFFGLKNLS), 51 to 86 (SASQYVEQMFETFDFNKDGYIDFMEYVAALSLVLKG), 87 to 122 (KVEQKLRWYFKLYDVDGNGCIDRDELLTIIQAIRAI), and 131 to 166 (TAEEFTDTVFSKIDVNGDGELSLEEFIEGVQKDQML). 15 residues coordinate Ca(2+): Asp64, Asn66, Asp68, Tyr70, Glu75, Asp100, Asp102, Asn104, Cys106, Glu111, Asp144, Asn146, Asp148, Glu150, and Glu155.

Homodimer. In the retina, it is expressed in rod and cone photoreceptors.

It is found in the membrane. It localises to the photoreceptor inner segment. The protein localises to the cell projection. The protein resides in the cilium. Its subcellular location is the photoreceptor outer segment. In terms of biological role, stimulates retinal guanylyl cyclase when free calcium ions concentration is low and inhibits guanylyl cyclase when free calcium ions concentration is elevated. This Ca(2+)-sensitive regulation of retinal guanylyl cyclase is a key event in recovery of the dark state of rod photoreceptors following light exposure. May be involved in cone photoreceptor light response and recovery of response in bright light. The sequence is that of Guanylyl cyclase-activating protein 1 (GUCA1A) from Homo sapiens (Human).